The following is a 405-amino-acid chain: Tyrosine--tRNA ligase (405 aa).

The 'HIGH' region signature appears at 48 to 57 (PTAPDLHLGH). The short motif at 232-236 (KMSKS) is the 'KMSKS' region element. K235 provides a ligand contact to ATP. An S4 RNA-binding domain is found at 343 to 404 (IWLPKLLADA…GKRRFVKVIF (62 aa)).

The protein belongs to the class-I aminoacyl-tRNA synthetase family. TyrS type 2 subfamily. As to quaternary structure, homodimer.

It localises to the cytoplasm. It carries out the reaction tRNA(Tyr) + L-tyrosine + ATP = L-tyrosyl-tRNA(Tyr) + AMP + diphosphate + H(+). In terms of biological role, catalyzes the attachment of tyrosine to tRNA(Tyr) in a two-step reaction: tyrosine is first activated by ATP to form Tyr-AMP and then transferred to the acceptor end of tRNA(Tyr). This is Tyrosine--tRNA ligase from Desulfotalea psychrophila (strain LSv54 / DSM 12343).